A 255-amino-acid chain; its full sequence is 3-deoxy-manno-octulosonate cytidylyltransferase (255 aa).

Belongs to the KdsB family.

The protein localises to the cytoplasm. The catalysed reaction is 3-deoxy-alpha-D-manno-oct-2-ulosonate + CTP = CMP-3-deoxy-beta-D-manno-octulosonate + diphosphate. It participates in nucleotide-sugar biosynthesis; CMP-3-deoxy-D-manno-octulosonate biosynthesis; CMP-3-deoxy-D-manno-octulosonate from 3-deoxy-D-manno-octulosonate and CTP: step 1/1. Its pathway is bacterial outer membrane biogenesis; lipopolysaccharide biosynthesis. Functionally, activates KDO (a required 8-carbon sugar) for incorporation into bacterial lipopolysaccharide in Gram-negative bacteria. The sequence is that of 3-deoxy-manno-octulosonate cytidylyltransferase from Polaromonas sp. (strain JS666 / ATCC BAA-500).